A 92-amino-acid polypeptide reads, in one-letter code: Large ribosomal subunit protein bL27 (92 aa).

Positions 1-9 are excised as a propeptide; that stretch reads MLKLNLQFF. Positions 14 to 34 are disordered; sequence GVGSTKNGRDSQSKRLGAKRA.

Belongs to the bacterial ribosomal protein bL27 family. In terms of processing, the N-terminus is cleaved by ribosomal processing cysteine protease Prp.

In Exiguobacterium sibiricum (strain DSM 17290 / CCUG 55495 / CIP 109462 / JCM 13490 / 255-15), this protein is Large ribosomal subunit protein bL27.